We begin with the raw amino-acid sequence, 367 residues long: MNVVDLLMKLLSFKSVTPDDAGSLAFIESYLKGYEATYVNKEGVKNLFLTKKFSEGPHLCFAGHVDVVPAGDGWHTNPFVPVIKEGKIYARGTQDMKSGVAAFVQAVKECEDFSGRLSILLTSDEEGDATYGTQIMLQHLKEIDLLPDACIVAEPTCETAFGDAIKVGRRGSVNGVIEKHGIQGHAAYPEKAKNPIHKVAQVLPMMAGVNLDEGDEFFGPSQFVITDLRAGMEVTNVTPGKLKMMFNVRNSTETTLEDVEKFVHTYFNGMDYDLTLKQSATPFLTDPDRPIVHALDESIQKVCGITPKHSTAGGTSDARFIAADNIDVIEFGVINDTIHAPNERTSIEEVEKLYEVFKETIKYFTQG.

H64 lines the Zn(2+) pocket. The active site involves D66. Residue D95 coordinates Zn(2+). E125 functions as the Proton acceptor in the catalytic mechanism. Positions 126, 154, and 339 each coordinate Zn(2+).

Belongs to the peptidase M20A family. DapE subfamily. In terms of assembly, homodimer. The cofactor is Zn(2+). Co(2+) is required as a cofactor.

It carries out the reaction N-succinyl-(2S,6S)-2,6-diaminopimelate + H2O = (2S,6S)-2,6-diaminopimelate + succinate. Its pathway is amino-acid biosynthesis; L-lysine biosynthesis via DAP pathway; LL-2,6-diaminopimelate from (S)-tetrahydrodipicolinate (succinylase route): step 3/3. Catalyzes the hydrolysis of N-succinyl-L,L-diaminopimelic acid (SDAP), forming succinate and LL-2,6-diaminopimelate (DAP), an intermediate involved in the bacterial biosynthesis of lysine and meso-diaminopimelic acid, an essential component of bacterial cell walls. This is Succinyl-diaminopimelate desuccinylase from Sulfurovum sp. (strain NBC37-1).